The following is a 321-amino-acid chain: Polyprenyl transferase cle5 (321 aa).

9 helical membrane passes run 26 to 46 (PLLATFSGVWATILAGSHKIT), 57 to 77 (VLSQALLCFICSFVFCGAGMV), 107 to 127 (EALVWMAFQFISSWVLVSWML), 132 to 149 (VQAAMLPVTLSTILYPFA), 159 to 179 (IYPQYLLGFTLAYPSLIGTLA), 189 to 209 (LWASINQSLPMFVTVFTWTLY), 232 to 252 (VLAGSYIHHLLVVLAVLVLGA), 262 to 282 (SQWLWGGWMGVWTWSFLGQLV), and 300 to 320 (FALGVWTVFVCVVELLIGGNG).

The protein belongs to the UbiA prenyltransferase family. It depends on Mg(2+) as a cofactor.

Its subcellular location is the membrane. It participates in secondary metabolite biosynthesis; terpenoid biosynthesis. In terms of biological role, polyprenyl transferase; part of the cluster A that mediates the biosynthesis of chevalone E and its oxidized derivatives that possess a unique five-membered lactone ring and can synergistically enhance the cytotoxicity of doxorubicin (DOX) in breast cancer cells. Within the pathway, cle5 takes part to the biosynthesis of the molecular scaffold by catalyzing the C-3 geranylgeranylation reaction of triacetic acid lactone (TAL) produced by cle1. The molecular scaffold is commonly biosynthesized by a series of enzymes including the non-reducing polyketide synthase (NR-PKS) cle1 that produces the alpha-pyrone triacetic acid lactone (TAL); The membrane-bound prenyltransferase cle5 that accepts TAL as its substrate to perform a C-3 geranylgeranylation reaction, in which the pathway-dedicated GGPS cle6 is required to provide GGPP, the other substrate of cle5; the FAD-dependent monooxygenase Cle3 that forms an (S)-epoxide ring at the terminal olefin of the geranylgeranyl group; and the terpene cyclase Cle7 that catalyzes the cyclization of the prenyl group that yields the pentacyclic pathway intermediate chevalone E. Chevalone E can derivatize into seven new oxidized analogs by the cytochrome P450 monooxygenases cle2 (acting at C-20) and cle4 (acting at C-11 and C-12). In Aspergillus versicolor, this protein is Polyprenyl transferase cle5.